Consider the following 423-residue polypeptide: Histidine--tRNA ligase (423 aa).

This sequence belongs to the class-II aminoacyl-tRNA synthetase family. As to quaternary structure, homodimer.

Its subcellular location is the cytoplasm. The enzyme catalyses tRNA(His) + L-histidine + ATP = L-histidyl-tRNA(His) + AMP + diphosphate + H(+). This chain is Histidine--tRNA ligase, found in Orientia tsutsugamushi (strain Ikeda) (Rickettsia tsutsugamushi).